Reading from the N-terminus, the 384-residue chain is Putative F-box/kelch-repeat protein At3g27910 (384 aa).

An F-box domain is found at 27–79; the sequence is SPTSLPLPDEIIVNCFAYIPRCDYPSLSLVSKTFNRLITSIELNIVRSLFQRT. Kelch repeat units lie at residues 138–184, 185–235, 237–274, and 275–323; these read KIYV…IVDG, KIYV…VMNK, IYIM…VIDN, and MLYT…MANH.

This Arabidopsis thaliana (Mouse-ear cress) protein is Putative F-box/kelch-repeat protein At3g27910.